The sequence spans 363 residues: Uroporphyrinogen decarboxylase (363 aa).

Residues 36–40, Asp-85, Tyr-160, Ser-215, and His-339 contribute to the substrate site; that span reads RQAGR.

This sequence belongs to the uroporphyrinogen decarboxylase family. Homodimer.

The protein localises to the cytoplasm. The enzyme catalyses uroporphyrinogen III + 4 H(+) = coproporphyrinogen III + 4 CO2. The protein operates within porphyrin-containing compound metabolism; protoporphyrin-IX biosynthesis; coproporphyrinogen-III from 5-aminolevulinate: step 4/4. Functionally, catalyzes the decarboxylation of four acetate groups of uroporphyrinogen-III to yield coproporphyrinogen-III. The protein is Uroporphyrinogen decarboxylase of Saccharopolyspora erythraea (strain ATCC 11635 / DSM 40517 / JCM 4748 / NBRC 13426 / NCIMB 8594 / NRRL 2338).